The sequence spans 229 residues: Urease accessory protein UreF (229 aa).

This sequence belongs to the UreF family. In terms of assembly, ureD, UreF and UreG form a complex that acts as a GTP-hydrolysis-dependent molecular chaperone, activating the urease apoprotein by helping to assemble the nickel containing metallocenter of UreC. The UreE protein probably delivers the nickel.

Its subcellular location is the cytoplasm. In terms of biological role, required for maturation of urease via the functional incorporation of the urease nickel metallocenter. The chain is Urease accessory protein UreF from Staphylococcus aureus (strain USA300).